The sequence spans 191 residues: Ribosomal RNA small subunit methyltransferase G (191 aa).

S-adenosyl-L-methionine contacts are provided by residues glycine 62, phenylalanine 67, 111 to 112 (IE), and arginine 124.

The protein belongs to the methyltransferase superfamily. RNA methyltransferase RsmG family.

The protein localises to the cytoplasm. It catalyses the reaction guanosine(527) in 16S rRNA + S-adenosyl-L-methionine = N(7)-methylguanosine(527) in 16S rRNA + S-adenosyl-L-homocysteine. Functionally, specifically methylates the N7 position of guanine in position 527 of 16S rRNA. In Rickettsia typhi (strain ATCC VR-144 / Wilmington), this protein is Ribosomal RNA small subunit methyltransferase G.